The chain runs to 177 residues: Large ribosomal subunit protein uL6 (177 aa).

Belongs to the universal ribosomal protein uL6 family. In terms of assembly, part of the 50S ribosomal subunit.

This protein binds to the 23S rRNA, and is important in its secondary structure. It is located near the subunit interface in the base of the L7/L12 stalk, and near the tRNA binding site of the peptidyltransferase center. The polypeptide is Large ribosomal subunit protein uL6 (Rhizobium meliloti (strain 1021) (Ensifer meliloti)).